The primary structure comprises 221 residues: Protein LURP-one-related 17 (221 aa).

Residues 1–20 are disordered; the sequence is MFPFLKQRSRSVHGEDAPSS.

The protein belongs to the LOR family.

In terms of biological role, might be related to the phospholipid scramblase and tubby-like superfamily of membrane tethered transcription factors. This Arabidopsis thaliana (Mouse-ear cress) protein is Protein LURP-one-related 17.